The primary structure comprises 300 residues: 33 kDa chaperonin (300 aa).

2 disulfides stabilise this stretch: Cys-235–Cys-237 and Cys-269–Cys-272.

Belongs to the HSP33 family. Post-translationally, under oxidizing conditions two disulfide bonds are formed involving the reactive cysteines. Under reducing conditions zinc is bound to the reactive cysteines and the protein is inactive.

It localises to the cytoplasm. Redox regulated molecular chaperone. Protects both thermally unfolding and oxidatively damaged proteins from irreversible aggregation. Plays an important role in the bacterial defense system toward oxidative stress. This is 33 kDa chaperonin from Pseudomonas syringae pv. syringae (strain B728a).